The primary structure comprises 240 residues: Phosducin-like protein 2 (240 aa).

Positions 38 to 201 (QQEAMVKPYE…LEWKLSEVGA (164 aa)) constitute a Phosducin domain. The interval 89–240 (FGELREISGN…DSSGSDTEAK (152 aa)) is thioredoxin fold.

The protein belongs to the phosducin family. Interacts with the CCT chaperonin complex and actin. Testis-specific (at protein level).

It is found in the endoplasmic reticulum. In terms of biological role, essential for male fertility, spermiogenesis and acrosome formation. The chain is Phosducin-like protein 2 (Pdcl2) from Mus musculus (Mouse).